The chain runs to 53 residues: Conotoxin Bu27 (53 aa).

A propeptide spanning residues 1-12 (ASDGRNAVVHER) is cleaved from the precursor. Pro14 carries the 4-hydroxyproline modification. Glu15 bears the 4-carboxyglutamate mark. 2 O-linked (HexNAc...) threonine glycosylation sites follow: Thr19 and Thr21. Pro29, Pro34, Pro35, Pro43, Pro44, and Pro48 each carry 4-hydroxyproline. Pro48 bears the Proline amide mark. The propeptide occupies 49 to 53 (GRRND).

This sequence belongs to the conotoxin A superfamily. Contains 3 disulfide bonds. As to expression, expressed by the venom duct.

Its subcellular location is the secreted. Functionally, probable neurotoxin with ion channel inhibitor activity. In Conus bullatus (Bubble cone), this protein is Conotoxin Bu27.